Here is a 606-residue protein sequence, read N- to C-terminus: ATP-dependent rRNA helicase SPB4 (606 aa).

The short motif at 7-35 (WDNLGFSLLPWIRTGLDVMGFETMTPVQA) is the Q motif element. Residues 38–224 (IPMLAGNKDV…KTGLRNPVRI (187 aa)) enclose the Helicase ATP-binding domain. 51-58 (SVTGSGKT) is an ATP binding site. A DEAD box motif is present at residues 172 to 175 (DEAD). One can recognise a Helicase C-terminal domain in the interval 248-404 (KLQLLVSILN…ELDLEVKGIT (157 aa)). Ser254 carries the phosphoserine modification. Positions 539-582 (KTLTKERKLERKEKMSLKRKAIEEELKAEELDENAEEERIKEDW) form a coiled coil.

This sequence belongs to the DEAD box helicase family. DDX55/SPB4 subfamily. In terms of assembly, component of pre-60S ribosomal complexes.

The protein localises to the nucleus. The protein resides in the nucleolus. It carries out the reaction ATP + H2O = ADP + phosphate + H(+). ATP-binding RNA helicase involved in the biogenesis of 60S ribosomal subunits. Binds 90S pre-ribosomal particles and dissociates from pre-60S ribosomal particles after processing of 27SB pre-rRNA. Required for the normal formation of 18S rRNA through the processing of pre-rRNAs at sites A0, A1 and A2, and the normal formation of 25S and 5.8S rRNAs through the processing of pre-rRNAs at sites C1 and C2. Also required for recruitment of NOG2 to pre-ribosomes. This is ATP-dependent rRNA helicase SPB4 from Saccharomyces cerevisiae (strain ATCC 204508 / S288c) (Baker's yeast).